The following is an 815-amino-acid chain: SNF1 protein kinase subunit beta-1 (815 aa).

Residues methionine 1–serine 11 are compositionally biased toward polar residues. Disordered regions lie at residues methionine 1 to lysine 88 and serine 117 to arginine 146. Glycine 2 carries N-myristoyl glycine lipidation. Residues histidine 12–glutamine 31 show a composition bias toward basic and acidic residues. Over residues glycine 32–arginine 42 the composition is skewed to polar residues. Serine 33 is subject to Phosphoserine. 2 stretches are compositionally biased toward basic and acidic residues: residues proline 72–lysine 88 and serine 117–valine 129. Residues serine 181, serine 198, serine 200, serine 206, serine 209, and serine 220 each carry the phosphoserine modification. Disordered regions lie at residues histidine 311–phenylalanine 335 and lysine 362–leucine 389. Low complexity predominate over residues asparagine 313–glycine 326. Serine 331 bears the Phosphoserine mark. Positions histidine 363–arginine 376 are enriched in basic residues. A compositionally biased stretch (low complexity) spans serine 377 to leucine 389. Residues valine 473–glutamate 716 are kinase-interacting sequence (KIS); required for interaction with SNF1. Phosphoserine occurs at positions 494 and 497. The disordered stretch occupies residues glutamate 581 to serine 616. A compositionally biased stretch (basic and acidic residues) spans glutamate 587 to arginine 596. The segment covering serine 599–serine 608 has biased composition (low complexity). Serine 643 is modified (phosphoserine). Residues serine 724–cysteine 804 form an association with SNF1 kinase complex (ASC) domain; required for interaction with SNF4 region.

Belongs to the 5'-AMP-activated protein kinase beta subunit family. In terms of assembly, component of the SNF1 kinase complex, a heterotrimeric complex composed of the catalytic alpha subunit SNF1, one of the three related beta subunits SIP1, SIP2 or GAL83, and the regulatory gamma subunit SNF4. The beta subunit serves as a bridge between the catalytic and the regulatory subunit. Interacts (via KIS domain) with SNF1. Interacts (via ASC domain) with SNF4. Post-translationally, phosphorylated by SNF1 in vitro.

Its subcellular location is the cytoplasm. It is found in the vacuole membrane. Beta subunit of the SNF1 kinase complex, which is required for transcriptional, metabolic, and developmental adaptations in response to glucose limitation. Has a structural role, mediating heterotrimer formation, and a regulatory role, defining carbon source-regulated subcellular location and substrate specificity of the SNF1 kinase complex. Promotes the PKA-regulated relocalization of the SNF1 kinase complex to the vacuolar membrane in response to various types of carbon stress. The sequence is that of SNF1 protein kinase subunit beta-1 (SIP1) from Saccharomyces cerevisiae (strain ATCC 204508 / S288c) (Baker's yeast).